Here is a 341-residue protein sequence, read N- to C-terminus: Putative casein kinase I C03C10.2 (341 aa).

Residues Trp50–Leu326 form the Protein kinase domain. Residues Ile56–Ile64 and Lys79 contribute to the ATP site. Catalysis depends on Asp173, which acts as the Proton acceptor.

The protein belongs to the protein kinase superfamily. CK1 Ser/Thr protein kinase family. Casein kinase I subfamily.

The catalysed reaction is L-seryl-[protein] + ATP = O-phospho-L-seryl-[protein] + ADP + H(+). It carries out the reaction L-threonyl-[protein] + ATP = O-phospho-L-threonyl-[protein] + ADP + H(+). The chain is Putative casein kinase I C03C10.2 from Caenorhabditis elegans.